A 304-amino-acid chain; its full sequence is Aspartate carbamoyltransferase catalytic subunit (304 aa).

Carbamoyl phosphate is bound by residues Arg54 and Thr55. Lys83 is a binding site for L-aspartate. Positions 104, 132, and 135 each coordinate carbamoyl phosphate. The L-aspartate site is built by Arg165 and Arg226. The carbamoyl phosphate site is built by Leu265 and Pro266.

This sequence belongs to the aspartate/ornithine carbamoyltransferase superfamily. ATCase family. As to quaternary structure, heterooligomer of catalytic and regulatory chains.

It carries out the reaction carbamoyl phosphate + L-aspartate = N-carbamoyl-L-aspartate + phosphate + H(+). The protein operates within pyrimidine metabolism; UMP biosynthesis via de novo pathway; (S)-dihydroorotate from bicarbonate: step 2/3. Its function is as follows. Catalyzes the condensation of carbamoyl phosphate and aspartate to form carbamoyl aspartate and inorganic phosphate, the committed step in the de novo pyrimidine nucleotide biosynthesis pathway. The protein is Aspartate carbamoyltransferase catalytic subunit of Pyrobaculum neutrophilum (strain DSM 2338 / JCM 9278 / NBRC 100436 / V24Sta) (Thermoproteus neutrophilus).